A 273-amino-acid polypeptide reads, in one-letter code: MTNRQWETLREYDEIKYEFYEGIAKVTINRPEVRNAFTPKTVAEMIDAFSRARDDQNVSVIVLTGEGDLAFCSGGDQKKRGHGGYVGEDQIPRLNVLDLQRLIRIIPKPVIAMVKGYAVGGGNVLNVVCDLTIAADNAIFGQTGPKVGSFDAGYGSGYLARIVGHKKAREIWYLCRQYNAQEALDMGLVNTVVPLEKVEDETVQWCKEIMKHSPTALRFLKAAMNADTDGLAGLQQMAGDATLLYYTTDEAKEGRDAFKEKRDPDFDQFPKFP.

Substrate contacts are provided by residues R34, 73–77 (SGGDQ), Y85, 117–121 (YAVGG), T143, S149, Y246, and K261. 142–144 (QTG) is a hydrogencarbonate binding site. The span at 254-265 (GRDAFKEKRDPD) shows a compositional bias: basic and acidic residues. A disordered region spans residues 254 to 273 (GRDAFKEKRDPDFDQFPKFP).

This sequence belongs to the enoyl-CoA hydratase/isomerase family. MenB subfamily. Hydrogencarbonate serves as cofactor.

The catalysed reaction is 2-succinylbenzoyl-CoA + H(+) = 1,4-dihydroxy-2-naphthoyl-CoA + H2O. It functions in the pathway quinol/quinone metabolism; 1,4-dihydroxy-2-naphthoate biosynthesis; 1,4-dihydroxy-2-naphthoate from chorismate: step 6/7. Its pathway is quinol/quinone metabolism; menaquinone biosynthesis. In terms of biological role, converts o-succinylbenzoyl-CoA (OSB-CoA) to 1,4-dihydroxy-2-naphthoyl-CoA (DHNA-CoA). This chain is 1,4-dihydroxy-2-naphthoyl-CoA synthase, found in Staphylococcus aureus (strain MRSA252).